We begin with the raw amino-acid sequence, 756 residues long: MTTQNTTPAGFTGNRNRYYNPVSKIQSLIHNLDAELVQLCKQCSVQKPLTSLNNSTSLGSHFSNFGALGGGSGSKTMGGSSSMGSNNFSPDSIGNLLARVRASTPLPRTVTSSPTAPEAQKRQMRNVYRTRVIDAYRNRRIFTVYGNYHTVRRALMRRGWLEKLPASRHAKLQSMSEDALLEHARRGNDYEAVVISKMINHFPAFFIWQGKGQRDLCAEVRPFRNRVRRSQFLDFSTKVGLVGCAEQERWYREDGVCGMSYPRFYRLGGNNLEERMAFIEDYQQTQARSLLLYVREHQPAELISENGTIFSTTLDFALGKVKKMVRHAEHYSLDDARIKPPTPAEIVENQTFMVQSTDVLKSNAKFKVSEKVMAEYARLAGLYLDQIESLRPDYRWDGSRNLWILKPGYQSRGIGIVIRSSLDDILQWTSNNQNKKYIVQKYIERPLLIYRTKFDIRQYMLLTITDTKVSIWTYRDCYLRFSSQEFTMDDLRESIHLTNNSVQKRYKNKTNRDSRLPKNNMWSLDQFKNYLRIMGAPDGSWSKTYNGFKQNLVAVVMASLDETELLQNAFELYGCDFMLDEHYNPILIEINSTPDLSPSTEITARICPMVLKDCIRVVVDLPKNPTAATGLFELAFEVNYSINKGADGKPLELNGKQMTLFENMPRMRNSPRTRLLRKILNNVKTSTTKKVEKVVEAPAKNVKNPTAKITKKKKLSASAGSSTAASAQPSTQNLTTKLILNPATRENLALQYTAPK.

The interval 104 to 123 is disordered; the sequence is TPLPRTVTSSPTAPEAQKRQ. The region spanning 272-629 is the TTL domain; that stretch reads LEERMAFIED…DLPKNPTAAT (358 aa). ATP-binding positions include 440 to 443, lysine 453, and aspartate 455; that span reads QKYI. Residues 709-736 are disordered; sequence ITKKKKLSASAGSSTAASAQPSTQNLTT. A compositionally biased stretch (low complexity) spans 716-727; that stretch reads SASAGSSTAASA.

The protein resides in the cytoplasm. Its subcellular location is the cytoskeleton. The protein localises to the nucleus. Functionally, essential glycylase which modifies both tubulin and non-tubulin proteins, generating side chains of glycine on the gamma-carboxyl groups of specific glutamate residues of target proteins. Monoglycylates alpha-tubulin by adding a single glycine chain to generate monoglycine side chains, but is not involved in elongation step to generate polyglycine side chains on alpha-tubulin. Has the ability to both mono- and polyglycylate non-tubulin proteins such as up (Troponin T). Required for early steps of spermatogenesis. The polypeptide is Tubulin glycylase 3B (TTLL3B) (Drosophila melanogaster (Fruit fly)).